The sequence spans 209 residues: Uracil phosphoribosyltransferase (209 aa).

5-phospho-alpha-D-ribose 1-diphosphate is bound by residues Arg-79, Arg-104, and Asp-131 to Ser-139. Uracil-binding positions include Ile-194 and Gly-199–Ala-201. Asp-200 is a binding site for 5-phospho-alpha-D-ribose 1-diphosphate.

It belongs to the UPRTase family. Requires Mg(2+) as cofactor.

The catalysed reaction is UMP + diphosphate = 5-phospho-alpha-D-ribose 1-diphosphate + uracil. It participates in pyrimidine metabolism; UMP biosynthesis via salvage pathway; UMP from uracil: step 1/1. Allosterically activated by GTP. Its function is as follows. Catalyzes the conversion of uracil and 5-phospho-alpha-D-ribose 1-diphosphate (PRPP) to UMP and diphosphate. The protein is Uracil phosphoribosyltransferase of Francisella tularensis subsp. novicida (strain U112).